Consider the following 652-residue polypeptide: Probable L-type lectin-domain containing receptor kinase S.5 (652 aa).

A signal peptide spans 1 to 20 (MRFSLAWKLLFLILTCKIET). Residues 21-266 (QVKCLKFDFP…EGLKIDGDGN (246 aa)) lie on the Extracellular side of the membrane. A legume-lectin like region spans residues 24–257 (CLKFDFPGFN…LNCVRSWSFE (234 aa)). Residues Asn33, Asn91, Asn97, Asn100, Asn122, Asn139, Asn201, and Asn244 are each glycosylated (N-linked (GlcNAc...) asparagine). A helical membrane pass occupies residues 267-287 (MLWLWITIPIVFIVGIGAFLG). Residues 288-652 (ALYLRSRSKA…INSLTELTGR (365 aa)) lie on the Cytoplasmic side of the membrane. Positions 330–622 (FGAENKLGQG…PDVPTERPAF (293 aa)) constitute a Protein kinase domain. Residues 336–344 (LGQGGFGMV) and Lys357 each bind ATP. Residue Asp455 is the Proton acceptor of the active site.

In the C-terminal section; belongs to the protein kinase superfamily. Ser/Thr protein kinase family. The protein in the N-terminal section; belongs to the leguminous lectin family.

It localises to the cell membrane. It carries out the reaction L-seryl-[protein] + ATP = O-phospho-L-seryl-[protein] + ADP + H(+). The catalysed reaction is L-threonyl-[protein] + ATP = O-phospho-L-threonyl-[protein] + ADP + H(+). This Arabidopsis thaliana (Mouse-ear cress) protein is Probable L-type lectin-domain containing receptor kinase S.5 (LECRKS5).